Here is a 271-residue protein sequence, read N- to C-terminus: Putative hydro-lyase jk0403 (271 aa).

This sequence belongs to the D-glutamate cyclase family.

This chain is Putative hydro-lyase jk0403, found in Corynebacterium jeikeium (strain K411).